The chain runs to 237 residues: Ig heavy chain Mem5 (237 aa).

2 consecutive Ig-like domains span residues 1–119 and 126–218; these read EVKL…LTVS and PSVY…KKIE. A disulfide bridge links cysteine 22 with cysteine 98. The interval 101-105 is d segment; that stretch reads VDYGT. The segment at 106–120 is JH2 segment; it reads NYDYWGQGTTLTVSS. Cysteines 147 and 202 form a disulfide.

It is found in the secreted. Its function is as follows. Anti-influenza H3N2 neuraminidase antibody. In Mus musculus (Mouse), this protein is Ig heavy chain Mem5.